We begin with the raw amino-acid sequence, 285 residues long: Bifunctional protein FolD (285 aa).

NADP(+)-binding positions include 165–167 (GAS) and Ser-190.

This sequence belongs to the tetrahydrofolate dehydrogenase/cyclohydrolase family. As to quaternary structure, homodimer.

It catalyses the reaction (6R)-5,10-methylene-5,6,7,8-tetrahydrofolate + NADP(+) = (6R)-5,10-methenyltetrahydrofolate + NADPH. It carries out the reaction (6R)-5,10-methenyltetrahydrofolate + H2O = (6R)-10-formyltetrahydrofolate + H(+). Its pathway is one-carbon metabolism; tetrahydrofolate interconversion. Functionally, catalyzes the oxidation of 5,10-methylenetetrahydrofolate to 5,10-methenyltetrahydrofolate and then the hydrolysis of 5,10-methenyltetrahydrofolate to 10-formyltetrahydrofolate. This Cupriavidus metallidurans (strain ATCC 43123 / DSM 2839 / NBRC 102507 / CH34) (Ralstonia metallidurans) protein is Bifunctional protein FolD.